A 329-amino-acid polypeptide reads, in one-letter code: GTP 3',8-cyclase (329 aa).

Positions 8–234 (AFARKFYYLR…QLRQRSDGPA (227 aa)) constitute a Radical SAM core domain. GTP is bound at residue Arg17. Residues Cys24 and Cys28 each contribute to the [4Fe-4S] cluster site. Residue Tyr30 coordinates S-adenosyl-L-methionine. Cys31 lines the [4Fe-4S] cluster pocket. Arg68 is a binding site for GTP. Gly72 provides a ligand contact to S-adenosyl-L-methionine. Residue Thr99 participates in GTP binding. Ser123 contributes to the S-adenosyl-L-methionine binding site. A GTP-binding site is contributed by Lys160. Met194 serves as a coordination point for S-adenosyl-L-methionine. Residues Cys257 and Cys260 each coordinate [4Fe-4S] cluster. A GTP-binding site is contributed by 262–264 (RLR). Cys274 contacts [4Fe-4S] cluster.

Belongs to the radical SAM superfamily. MoaA family. As to quaternary structure, monomer and homodimer. It depends on [4Fe-4S] cluster as a cofactor.

The catalysed reaction is GTP + AH2 + S-adenosyl-L-methionine = (8S)-3',8-cyclo-7,8-dihydroguanosine 5'-triphosphate + 5'-deoxyadenosine + L-methionine + A + H(+). Its pathway is cofactor biosynthesis; molybdopterin biosynthesis. Catalyzes the cyclization of GTP to (8S)-3',8-cyclo-7,8-dihydroguanosine 5'-triphosphate. The sequence is that of GTP 3',8-cyclase from Escherichia coli O127:H6 (strain E2348/69 / EPEC).